The sequence spans 145 residues: MRLNTIKPGAGSKSAAKRVGRGIGSGLGKTCGRGHKGQKSRAGGFHKVGFEGGQMPLQRRLPKRGFVSLTAARKVEVRLSELDKLPVDDIDLLVLMQAGVVPADALSAKVVLSGTIGRKITLRGIGATKGALAAIEAAGGSVATA.

The disordered stretch occupies residues Met1–Gly43. Positions Arg21 to Cys31 are enriched in gly residues.

It belongs to the universal ribosomal protein uL15 family. As to quaternary structure, part of the 50S ribosomal subunit.

Its function is as follows. Binds to the 23S rRNA. This chain is Large ribosomal subunit protein uL15, found in Aromatoleum aromaticum (strain DSM 19018 / LMG 30748 / EbN1) (Azoarcus sp. (strain EbN1)).